The chain runs to 548 residues: Chaperonin GroEL 3 (548 aa).

Residues 30-33 (TLGP), K51, 87-91 (DGTTT), G415, and D496 contribute to the ATP site.

Belongs to the chaperonin (HSP60) family. Forms a cylinder of 14 subunits composed of two heptameric rings stacked back-to-back. Interacts with the co-chaperonin GroES.

It localises to the cytoplasm. The enzyme catalyses ATP + H2O + a folded polypeptide = ADP + phosphate + an unfolded polypeptide.. Functionally, together with its co-chaperonin GroES, plays an essential role in assisting protein folding. The GroEL-GroES system forms a nano-cage that allows encapsulation of the non-native substrate proteins and provides a physical environment optimized to promote and accelerate protein folding. The protein is Chaperonin GroEL 3 of Nitrobacter winogradskyi (strain ATCC 25391 / DSM 10237 / CIP 104748 / NCIMB 11846 / Nb-255).